The sequence spans 195 residues: dCTP deaminase (195 aa).

DCTP is bound by residues Arg-110 to Arg-115, Asp-128, Val-136 to Glu-138, Tyr-171, Lys-178, and Gln-182. Catalysis depends on Glu-138, which acts as the Proton donor/acceptor. Residues Tyr-171 to Glu-195 form a disordered region.

The protein belongs to the dCTP deaminase family. Homotrimer.

It carries out the reaction dCTP + H2O + H(+) = dUTP + NH4(+). Its pathway is pyrimidine metabolism; dUMP biosynthesis; dUMP from dCTP (dUTP route): step 1/2. Catalyzes the deamination of dCTP to dUTP. This is dCTP deaminase from Haemophilus influenzae (strain ATCC 51907 / DSM 11121 / KW20 / Rd).